The sequence spans 33 residues: uncharacterized protein (33 aa).

Topologically, residues Met-1 to Lys-12 are cytoplasmic. Residues Leu-13–Tyr-33 form a helical membrane-spanning segment.

It localises to the cell inner membrane. This is an uncharacterized protein from Escherichia coli (strain K12).